Consider the following 425-residue polypeptide: Polyribonucleotide 5'-hydroxyl-kinase Clp1 (425 aa).

ATP-binding positions include E22, K62, and 124 to 129 (DVGKST).

Belongs to the Clp1 family. Clp1 subfamily. Component of the tRNA splicing endonuclease complex, composed of CLP1, TSEN2, TSEN15, TSEN34 and TSEN54. Component of pre-mRNA cleavage complex II (CF-II). Also associates with numerous components of the pre-mRNA cleavage complex I (CF-I/CFIm), including NUDT21, CPSF2, CPSF3, CPSF6 and CPSF7. Interacts with CSTF2 and SYMPK. Requires Mg(2+) as cofactor. Mn(2+) serves as cofactor. The cofactor is Ni(2+).

The protein resides in the nucleus. It carries out the reaction a 5'-end dephospho-2'-deoxyribonucleoside-DNA + ATP = a 5'-end 5'-phospho-2'-deoxyribonucleoside-DNA + ADP + H(+). The catalysed reaction is a 5'-end dephospho-ribonucleoside-RNA + ATP = a 5'-end 5'-phospho-ribonucleoside-RNA + ADP + H(+). In terms of biological role, polynucleotide kinase that can phosphorylate the 5'-hydroxyl groups of double-stranded RNA (dsRNA), single-stranded RNA (ssRNA), double-stranded DNA (dsDNA) and double-stranded DNA:RNA hybrids. dsRNA is phosphorylated more efficiently than dsDNA, and the RNA component of a DNA:RNA hybrid is phosphorylated more efficiently than the DNA component. Plays a key role in both tRNA splicing and mRNA 3'-end formation. Component of the tRNA splicing endonuclease complex: phosphorylates the 5'-terminus of the tRNA 3'-exon during tRNA splicing; this phosphorylation event is a prerequisite for the subsequent ligation of the two exon halves and the production of a mature tRNA. Its role in tRNA splicing and maturation is required for cerebellar development. Component of the pre-mRNA cleavage complex II (CF-II), which seems to be required for mRNA 3'-end formation. Also phosphorylates the 5'-terminus of exogenously introduced short interfering RNAs (siRNAs), which is a necessary prerequisite for their incorporation into the RNA-induced silencing complex (RISC). However, endogenous siRNAs and microRNAs (miRNAs) that are produced by the cleavage of dsRNA precursors by DICER1 already contain a 5'-phosphate group, so this protein may be dispensible for normal RNA-mediated gene silencing. This chain is Polyribonucleotide 5'-hydroxyl-kinase Clp1, found in Bos taurus (Bovine).